We begin with the raw amino-acid sequence, 121 residues long: Small ribosomal subunit protein uS13 (121 aa).

Residues 91 to 121 (HRRGLPVRGQKTKNNARTRKGPVKTVANKKK) are disordered.

Belongs to the universal ribosomal protein uS13 family. In terms of assembly, part of the 30S ribosomal subunit. Forms a loose heterodimer with protein S19. Forms two bridges to the 50S subunit in the 70S ribosome.

Its function is as follows. Located at the top of the head of the 30S subunit, it contacts several helices of the 16S rRNA. In the 70S ribosome it contacts the 23S rRNA (bridge B1a) and protein L5 of the 50S subunit (bridge B1b), connecting the 2 subunits; these bridges are implicated in subunit movement. Contacts the tRNAs in the A and P-sites. This Staphylococcus saprophyticus subsp. saprophyticus (strain ATCC 15305 / DSM 20229 / NCIMB 8711 / NCTC 7292 / S-41) protein is Small ribosomal subunit protein uS13.